Here is a 703-residue protein sequence, read N- to C-terminus: Polyribonucleotide nucleotidyltransferase (703 aa).

Positions 482 and 488 each coordinate Mg(2+). A KH domain is found at 549 to 607 (PKAQVMKIPEDKVGLVIGPAGKNIKYIKEQFGASVWIDGANAYINAPTIEAVNKAADFI). The 63-residue stretch at 617–679 (GGVYEGKVIR…EQNRLNLCSP (63 aa)) folds into the S1 motif domain. Residues 677–703 (CSPDYQKPENQERPRKEQLNRKPHHRK) form a disordered region. A compositionally biased stretch (basic and acidic residues) spans 682–696 (QKPENQERPRKEQLN).

The protein belongs to the polyribonucleotide nucleotidyltransferase family. It depends on Mg(2+) as a cofactor.

The protein localises to the cytoplasm. The enzyme catalyses RNA(n+1) + phosphate = RNA(n) + a ribonucleoside 5'-diphosphate. Functionally, involved in mRNA degradation. Catalyzes the phosphorolysis of single-stranded polyribonucleotides processively in the 3'- to 5'-direction. The protein is Polyribonucleotide nucleotidyltransferase of Hydrogenobaculum sp. (strain Y04AAS1).